Reading from the N-terminus, the 372-residue chain is Queuine tRNA-ribosyltransferase (372 aa).

D92 (proton acceptor) is an active-site residue. Residues D92–F96, D146, Q188, and G215 contribute to the substrate site. Residues G246 to E252 form an RNA binding region. The active-site Nucleophile is D265. The tract at residues T270 to R274 is RNA binding; important for wobble base 34 recognition. The Zn(2+) site is built by C303, C305, C308, and H334.

This sequence belongs to the queuine tRNA-ribosyltransferase family. In terms of assembly, homodimer. Within each dimer, one monomer is responsible for RNA recognition and catalysis, while the other monomer binds to the replacement base PreQ1. Requires Zn(2+) as cofactor.

The catalysed reaction is 7-aminomethyl-7-carbaguanine + guanosine(34) in tRNA = 7-aminomethyl-7-carbaguanosine(34) in tRNA + guanine. The protein operates within tRNA modification; tRNA-queuosine biosynthesis. Functionally, catalyzes the base-exchange of a guanine (G) residue with the queuine precursor 7-aminomethyl-7-deazaguanine (PreQ1) at position 34 (anticodon wobble position) in tRNAs with GU(N) anticodons (tRNA-Asp, -Asn, -His and -Tyr). Catalysis occurs through a double-displacement mechanism. The nucleophile active site attacks the C1' of nucleotide 34 to detach the guanine base from the RNA, forming a covalent enzyme-RNA intermediate. The proton acceptor active site deprotonates the incoming PreQ1, allowing a nucleophilic attack on the C1' of the ribose to form the product. After dissociation, two additional enzymatic reactions on the tRNA convert PreQ1 to queuine (Q), resulting in the hypermodified nucleoside queuosine (7-(((4,5-cis-dihydroxy-2-cyclopenten-1-yl)amino)methyl)-7-deazaguanosine). This Synechococcus sp. (strain CC9902) protein is Queuine tRNA-ribosyltransferase.